The primary structure comprises 521 residues: MSDLTRLTISQARAKLRGKEITATEITEAYLSAIDRANPALNAYVAVTGDRARDMAKASDARLVKGEGGALEGIPLGIKDLFGTEGVHTQACSHVLDGFKPLYESTVTANLWADGAVMLGKLNMDEFAMGSSNETSYYGPVINPWRRSRLDTVVMPTTHQGDGGFVSAGGTKTQRSLDNAQLVPGGSSGGSATAVSAFLCAGATATDTGGSIRQPAAFTGTVGIKPTYGRCSRWGIVAFASSLDQAGPIARDVRDAAILLKSMASVDPKDTTSVDRPVPDYEAAIGKPIKGMKVGIPKEYRVDGMPEEIEALWQKGIAWLRDAGAEIVDISLPHTKYALPAYYIVAPAEASSNLARYDGVRYGLRVPGKDIVEMYEKTRAAGFGREVKRRIMIGTYVLSAGYYDAYYLQAQKVRNLIKRDFENVFAAGVDVILTPATPSAAFGIADEDMAADPVKMYLNDIFTVTVNMAGLPGIAVPAGLDPKGLPLGLQLIGRPFEEETLFQTAAVIEQAAGTFQPEKWW.

Catalysis depends on charge relay system residues lysine 79 and serine 187. Serine 211 (acyl-ester intermediate) is an active-site residue.

It belongs to the amidase family. GatA subfamily. In terms of assembly, heterotrimer of A, B and C subunits.

It carries out the reaction L-glutamyl-tRNA(Gln) + L-glutamine + ATP + H2O = L-glutaminyl-tRNA(Gln) + L-glutamate + ADP + phosphate + H(+). Its function is as follows. Allows the formation of correctly charged Gln-tRNA(Gln) through the transamidation of misacylated Glu-tRNA(Gln) in organisms which lack glutaminyl-tRNA synthetase. The reaction takes place in the presence of glutamine and ATP through an activated gamma-phospho-Glu-tRNA(Gln). This Mesorhizobium japonicum (strain LMG 29417 / CECT 9101 / MAFF 303099) (Mesorhizobium loti (strain MAFF 303099)) protein is Glutamyl-tRNA(Gln) amidotransferase subunit A.